Reading from the N-terminus, the 1040-residue chain is ATPase family AAA domain-containing protein 2 (1040 aa).

A compositionally biased stretch (basic residues) spans 1-11 (MSLLKMRRHAI). The disordered stretch occupies residues 1 to 30 (MSLLKMRRHAIHSSDSTSSSSSEDDCFERR). S65 bears the Phosphoserine mark. 122-129 (GPPGTGKT) lines the ATP pocket. Phosphoserine occurs at positions 401 and 406. Coiled coils occupy residues 619–643 (LTAEEVKRLEEQEEDTFRELRIFLR) and 735–761 (YAIIKEELDEDFEQLCEEIQESRKKRG). The Bromo domain occupies 629–741 (EQEEDTFREL…DTAYAIIKEE (113 aa)). Positions 772 to 799 (YHVMPKQNSPPVGDKKPDQEQNEKLKVP) are disordered. Glycyl lysine isopeptide (Lys-Gly) (interchain with G-Cter in SUMO2) cross-links involve residues K777 and K797. A compositionally biased stretch (basic and acidic residues) spans 784–797 (GDKKPDQEQNEKLK). T801 and T825 each carry phosphothreonine. Positions 811–833 (LKRKFHKKSKWHVGTKIKRRKIS) are enriched in basic residues. The segment at 811-935 (LKRKFHKKSK…SQVTDIPEDS (125 aa)) is disordered. Residues 835-848 (AKDNSLNAMNSSSR) are compositionally biased toward polar residues. Phosphoserine occurs at positions 849, 883, and 891. 2 stretches are compositionally biased toward basic and acidic residues: residues 849 to 863 (SDTEDSQHTHAEHTE) and 874 to 885 (ESDKQNRLESNI). A compositionally biased stretch (basic and acidic residues) spans 901 to 919 (EEPKETTEGTELRKDRIVC). S951 is subject to Phosphoserine. A Phosphothreonine modification is found at T972.

Belongs to the AAA ATPase family. In terms of assembly, interacts with ESR1 and NCOA3 and these interactions are enhanced by estradiol. Interacts with acetylated lysine residues on histone H1.4, H2A, H2B and H3 (in vitro).

Its subcellular location is the nucleus. The enzyme catalyses ATP + H2O = ADP + phosphate + H(+). Functionally, may be a transcriptional coactivator of the nuclear receptor ESR1 required to induce the expression of a subset of estradiol target genes, such as CCND1, MYC and E2F1. May play a role in the recruitment or occupancy of CREBBP at some ESR1 target gene promoters. May be required for histone hyperacetylation. This is ATPase family AAA domain-containing protein 2 (Atad2) from Mus musculus (Mouse).